Reading from the N-terminus, the 64-residue chain is Frontoxin V (64 aa).

5 disulfides stabilise this stretch: Cys-3/Cys-24, Cys-6/Cys-11, Cys-17/Cys-41, Cys-45/Cys-57, and Cys-58/Cys-63.

Expressed by the venom gland.

The protein localises to the secreted. In terms of biological role, produces peripheral paralysis by blocking neuromuscular transmission at the postsynaptic site. Binds to the muscular nicotinic acetylcholine receptor (nAChR). The protein is Frontoxin V of Micrurus frontalis (Coral snake).